We begin with the raw amino-acid sequence, 299 residues long: ATP phosphoribosyltransferase (299 aa).

Belongs to the ATP phosphoribosyltransferase family. Long subfamily. Equilibrium between an active dimeric form, an inactive hexameric form and higher aggregates. Interconversion between the various forms is largely reversible and is influenced by the natural substrates and inhibitors of the enzyme. Mg(2+) serves as cofactor.

The protein resides in the cytoplasm. The enzyme catalyses 1-(5-phospho-beta-D-ribosyl)-ATP + diphosphate = 5-phospho-alpha-D-ribose 1-diphosphate + ATP. It functions in the pathway amino-acid biosynthesis; L-histidine biosynthesis; L-histidine from 5-phospho-alpha-D-ribose 1-diphosphate: step 1/9. With respect to regulation, feedback inhibited by histidine. Its function is as follows. Catalyzes the condensation of ATP and 5-phosphoribose 1-diphosphate to form N'-(5'-phosphoribosyl)-ATP (PR-ATP). Has a crucial role in the pathway because the rate of histidine biosynthesis seems to be controlled primarily by regulation of HisG enzymatic activity. This Pectobacterium carotovorum subsp. carotovorum (strain PC1) protein is ATP phosphoribosyltransferase.